A 355-amino-acid polypeptide reads, in one-letter code: Probable butyrate kinase (355 aa).

It belongs to the acetokinase family.

Its subcellular location is the cytoplasm. The catalysed reaction is butanoate + ATP = butanoyl phosphate + ADP. In Clostridium botulinum (strain Eklund 17B / Type B), this protein is Probable butyrate kinase.